The chain runs to 499 residues: Putative antiporter subunit mnhD2 (499 aa).

14 consecutive transmembrane segments (helical) span residues 3-23 (LSNLLILPMLLPFLCALILVF), 33-53 (YLYLGTMTITTIISLMLLIYV), 79-99 (LSLIMVTTASFVITLIMAYGF), 109-129 (YHLPSFILFLSVGVIGSFLTS), 131-151 (LFNLYVMFEIMLLASFVLITL), 162-182 (IIYVVLNIIGSWLFLLGIGLL), 210-230 (ISLIFLVAFSAKAALVLFMWL), 241-261 (LAALFAALMTKVGAYALIRFF), 272-292 (IHPLLATMAAITMVIGAIGVI), 309-329 (IGFIILGLGTNTFAGINGAIF), 331-351 (LVNDIVVKTLLFFIIGSLVYI), 370-390 (FGVAFIIMIFAIGGVPPFSGF), 404-424 (GNYIGLALMIITSLIAMYSLF), and 452-472 (ILSILVVVVIAIGIAAPVVLN).

The protein belongs to the CPA3 antiporters (TC 2.A.63) subunit D family. In terms of assembly, may form a heterooligomeric complex that consists of seven subunits: mnhA2, mnhB2, mnhC2, mnhD2, mnhE2, mnhF2 and mnhG2.

The protein resides in the cell membrane. Its function is as follows. Expression of the mnh2 operon in E.coli is not able to catalyze Na(+)Li(+)/H(+) antiport. It does however confer higher growth rates than the control strain at up to pH 9.5. The operon may encode an NADH-ubiquinone oxidoreductase. The sequence is that of Putative antiporter subunit mnhD2 (mnhD2) from Staphylococcus aureus.